The sequence spans 468 residues: ATP synthase subunit beta (468 aa).

155-162 contributes to the ATP binding site; sequence GGAGVGKT.

It belongs to the ATPase alpha/beta chains family. F-type ATPases have 2 components, CF(1) - the catalytic core - and CF(0) - the membrane proton channel. CF(1) has five subunits: alpha(3), beta(3), gamma(1), delta(1), epsilon(1). CF(0) has three main subunits: a(1), b(2) and c(9-12). The alpha and beta chains form an alternating ring which encloses part of the gamma chain. CF(1) is attached to CF(0) by a central stalk formed by the gamma and epsilon chains, while a peripheral stalk is formed by the delta and b chains.

The protein resides in the cell membrane. It catalyses the reaction ATP + H2O + 4 H(+)(in) = ADP + phosphate + 5 H(+)(out). Produces ATP from ADP in the presence of a proton gradient across the membrane. The catalytic sites are hosted primarily by the beta subunits. This Streptococcus pneumoniae (strain Taiwan19F-14) protein is ATP synthase subunit beta.